The primary structure comprises 258 residues: MASAAAAEAEKGSPVVVGLLVVGNIIILLSGLSLFAETIWVTADQYRVYPLMGVSGKDDVFAGAWIAIFCGFSFFMVASFGVGAALCRRRSMVLTYLVLMLIVYIFECASCITSYTHRDYMVSNPSLITKQMLTFYSADTDQGQELTRLWDRVMIEQECCGTSGPMDWVNFTSAFRAATPEVVFPWPPLCCRRTGNFIPLNEEGCRLGHMDYLFTKGCFEHIGHAIDSYTWGISWFGFAILMWTLPVMLIAMYFYTML.

Over 1 to 14 the chain is Cytoplasmic; sequence MASAAAAEAEKGSP. A helical transmembrane segment spans residues 15 to 35; that stretch reads VVVGLLVVGNIIILLSGLSLF. Residues 36–59 are Extracellular-facing; it reads AETIWVTADQYRVYPLMGVSGKDD. The helical transmembrane segment at 60-86 threads the bilayer; that stretch reads VFAGAWIAIFCGFSFFMVASFGVGAAL. At 87–91 the chain is on the cytoplasmic side; it reads CRRRS. The chain crosses the membrane as a helical span at residues 92–112; it reads MVLTYLVLMLIVYIFECASCI. Over 113 to 230 the chain is Extracellular; sequence TSYTHRDYMV…HIGHAIDSYT (118 aa). An N-linked (GlcNAc...) asparagine glycan is attached at N170. Residues 231-252 traverse the membrane as a helical segment; sequence WGISWFGFAILMWTLPVMLIAM. Over 253–258 the chain is Cytoplasmic; that stretch reads YFYTML.

Belongs to the tetraspanin (TM4SF) family. As to quaternary structure, homodimer; disulfide-linked. Interacts with uroplakin-2 (UPK2). In terms of tissue distribution, high expression restricted to ureteric urothelium (most superficial cells); low expression in prostate. Expression in normal urothelial cells is lost in culture. Some expression in tumor cell lines derived from urothelial malignancies.

It is found in the membrane. Functionally, component of the asymmetric unit membrane (AUM); a highly specialized biomembrane elaborated by terminally differentiated urothelial cells. May play an important role in normal bladder epithelial physiology, possibly in regulating membrane permeability of superficial umbrella cells or in stabilizing the apical membrane through AUM/cytoskeletal interactions. The protein is Uroplakin-1a (UPK1A) of Homo sapiens (Human).